The following is a 135-amino-acid chain: ATP synthase epsilon chain (135 aa).

It belongs to the ATPase epsilon chain family. F-type ATPases have 2 components, CF(1) - the catalytic core - and CF(0) - the membrane proton channel. CF(1) has five subunits: alpha(3), beta(3), gamma(1), delta(1), epsilon(1). CF(0) has three main subunits: a, b and c.

Its subcellular location is the cell inner membrane. In terms of biological role, produces ATP from ADP in the presence of a proton gradient across the membrane. The chain is ATP synthase epsilon chain from Chelativorans sp. (strain BNC1).